Reading from the N-terminus, the 309-residue chain is Probable lipid kinase YegS-like (309 aa).

The DAGKc domain occupies Met-1–Tyr-133. ATP is bound by residues Ser-39, Gly-65–Glu-71, and Thr-95. The Mg(2+) site is built by Leu-214, Asp-217, and Leu-219. Glu-273 serves as the catalytic Proton acceptor.

It belongs to the diacylglycerol/lipid kinase family. YegS lipid kinase subfamily. Mg(2+) is required as a cofactor. Ca(2+) serves as cofactor.

Its subcellular location is the cytoplasm. Its function is as follows. Probably phosphorylates lipids; the in vivo substrate is unknown. The chain is Probable lipid kinase YegS-like from Shewanella frigidimarina (strain NCIMB 400).